Consider the following 142-residue polypeptide: ATP synthase epsilon chain (142 aa).

The protein belongs to the ATPase epsilon chain family. As to quaternary structure, F-type ATPases have 2 components, CF(1) - the catalytic core - and CF(0) - the membrane proton channel. CF(1) has five subunits: alpha(3), beta(3), gamma(1), delta(1), epsilon(1). CF(0) has three main subunits: a, b and c.

It localises to the cell inner membrane. In terms of biological role, produces ATP from ADP in the presence of a proton gradient across the membrane. This Shewanella sp. (strain ANA-3) protein is ATP synthase epsilon chain.